We begin with the raw amino-acid sequence, 161 residues long: 2-C-methyl-D-erythritol 2,4-cyclodiphosphate synthase (161 aa).

A divalent metal cation contacts are provided by Asp-10 and His-12. 4-CDP-2-C-methyl-D-erythritol 2-phosphate-binding positions include 10 to 12 (DVH) and 36 to 37 (HS). His-44 lines the a divalent metal cation pocket. 4-CDP-2-C-methyl-D-erythritol 2-phosphate contacts are provided by residues 58–60 (DIG), 63–67 (FSDTD), and Arg-144.

This sequence belongs to the IspF family. As to quaternary structure, homotrimer. A divalent metal cation is required as a cofactor.

It catalyses the reaction 4-CDP-2-C-methyl-D-erythritol 2-phosphate = 2-C-methyl-D-erythritol 2,4-cyclic diphosphate + CMP. It functions in the pathway isoprenoid biosynthesis; isopentenyl diphosphate biosynthesis via DXP pathway; isopentenyl diphosphate from 1-deoxy-D-xylulose 5-phosphate: step 4/6. In terms of biological role, involved in the biosynthesis of isopentenyl diphosphate (IPP) and dimethylallyl diphosphate (DMAPP), two major building blocks of isoprenoid compounds. Catalyzes the conversion of 4-diphosphocytidyl-2-C-methyl-D-erythritol 2-phosphate (CDP-ME2P) to 2-C-methyl-D-erythritol 2,4-cyclodiphosphate (ME-CPP) with a corresponding release of cytidine 5-monophosphate (CMP). The polypeptide is 2-C-methyl-D-erythritol 2,4-cyclodiphosphate synthase (Burkholderia ambifaria (strain ATCC BAA-244 / DSM 16087 / CCUG 44356 / LMG 19182 / AMMD) (Burkholderia cepacia (strain AMMD))).